The following is a 261-amino-acid chain: Transcription repressor OFP15 (261 aa).

The segment at 1 to 28 (MKLPFLNKNHSTSSYSSNSSSSSWPWPS) is disordered. The segment covering 11-28 (STSSYSSNSSSSSWPWPS) has biased composition (low complexity). The region spanning 112 to 172 (FSLESDDPYS…FAAFVDLLMN (61 aa)) is the OVATE domain.

Interacts with BLH1 and BLH3. As to expression, expressed in roots, cauline leaves, shoots, flower buds and siliques.

It is found in the nucleus. In terms of biological role, transcriptional repressor that regulates multiple aspects of plant growth and development through the regulation of BEL1-LIKE (BLH) and KNOX TALE (KNAT) homeodomain transcription factors. This is Transcription repressor OFP15 (OFP15) from Arabidopsis thaliana (Mouse-ear cress).